A 77-amino-acid chain; its full sequence is U8-lycotoxin-Ls1m (77 aa).

A signal peptide spans 1–20 (MKLIIFTGLVLFSIVSLIEA). Positions 21-26 (QAENEK) are excised as a propeptide.

This sequence belongs to the neurotoxin 19 (CSTX) family. 08 (U8-Lctx) subfamily. Contains 4 disulfide bonds. In terms of tissue distribution, expressed by the venom gland.

The protein resides in the secreted. The chain is U8-lycotoxin-Ls1m from Lycosa singoriensis (Wolf spider).